A 459-amino-acid polypeptide reads, in one-letter code: Vasoactive intestinal polypeptide receptor 1 (459 aa).

Positions 1–30 (MRPPSPPHVRWLCVLAGALACALRPAGSQA) are cleaved as a signal peptide. The Extracellular segment spans residues 31–142 (ASPQHECEYL…EQQQTKFYNT (112 aa)). Disulfide bonds link cysteine 37–cysteine 209, cysteine 50–cysteine 72, cysteine 63–cysteine 105, cysteine 86–cysteine 122, and cysteine 216–cysteine 286. Asparagine 58, asparagine 69, and asparagine 100 each carry an N-linked (GlcNAc...) asparagine glycan. The helical transmembrane segment at 143-167 (VKTGYTIGYSLSLASLLVAMAILSL) threads the bilayer. Topologically, residues 168–175 (FRKLHCTR) are cytoplasmic. The helical transmembrane segment at 176–197 (NYIHMHLFMSFILRATAVFIKD) threads the bilayer. Residues 198-217 (MALFNSGEIDHCSEASVGCK) lie on the Extracellular side of the membrane. The helical transmembrane segment at 218–242 (AAVVFFQYCVMANFFWLLVEGLYLY) threads the bilayer. Over 243–255 (TLLAVSFFSERKY) the chain is Cytoplasmic. A helical transmembrane segment spans residues 256-277 (FWGYILIGWGVPSVFITIWTVV). Residues 278–293 (RIYFEDFGCWDTIINS) are Extracellular-facing. N-linked (GlcNAc...) asparagine glycosylation occurs at asparagine 292. Residues 294–318 (SLWWIIKAPILLSILVNFVLFICII) form a helical membrane-spanning segment. Over 319–340 (RILVQKLRPPDIGKNDSSPYSR) the chain is Cytoplasmic. The chain crosses the membrane as a helical span at residues 341–361 (LAKSTLLLIPLFGIHYVMFAF). The Extracellular segment spans residues 362–369 (FPDNFKAQ). A helical membrane pass occupies residues 370–393 (VKMVFELVVGSFQGFVVAILYCFL). The Cytoplasmic portion of the chain corresponds to 394 to 459 (NGEVQAELRR…SSFQAEVSLV (66 aa)).

It belongs to the G-protein coupled receptor 2 family. Interacts with ADCYAP1/PACAP; activated by both PACAP27 and PACAP38 neuropeptides. Interacts with VIP; the interaction results in VIPR1 activation. In liver, lung, intestines, thymus and brain (mostly in the cerebral cortex and hippocampus).

It is found in the cell membrane. Functionally, g protein-coupled receptor activated by the neuropeptides vasoactive intestinal peptide (VIP) and pituitary adenylate cyclase-activating polypeptide (ADCYAP1/PACAP). Binds VIP and both PACAP27 and PACAP38 bioactive peptides with the following order of ligand affinity VIP = PACAP27 &gt; PACAP38. Ligand binding causes a conformation change that triggers signaling via guanine nucleotide-binding proteins (G proteins) and modulates the activity of downstream effectors. Activates cAMP-dependent pathway. The protein is Vasoactive intestinal polypeptide receptor 1 of Rattus norvegicus (Rat).